Reading from the N-terminus, the 376-residue chain is Chaperone protein DnaJ (376 aa).

The region spanning 5–70 is the J domain; it reads DYYEILGVSK…QKRAAYDQYG (66 aa). Residues 131–209 form a CR-type zinc finger; sequence GVTKEIRIPT…CHGHGRVERS (79 aa). Cysteine 144, cysteine 147, cysteine 161, cysteine 164, cysteine 183, cysteine 186, cysteine 197, and cysteine 200 together coordinate Zn(2+). CXXCXGXG motif repeat units follow at residues 144–151, 161–168, 183–190, and 197–204; these read CDVCHGSG, CPTCHGSG, CPHCQGRG, and CNKCHGHG.

Belongs to the DnaJ family. Homodimer. It depends on Zn(2+) as a cofactor.

Its subcellular location is the cytoplasm. In terms of biological role, participates actively in the response to hyperosmotic and heat shock by preventing the aggregation of stress-denatured proteins and by disaggregating proteins, also in an autonomous, DnaK-independent fashion. Unfolded proteins bind initially to DnaJ; upon interaction with the DnaJ-bound protein, DnaK hydrolyzes its bound ATP, resulting in the formation of a stable complex. GrpE releases ADP from DnaK; ATP binding to DnaK triggers the release of the substrate protein, thus completing the reaction cycle. Several rounds of ATP-dependent interactions between DnaJ, DnaK and GrpE are required for fully efficient folding. Also involved, together with DnaK and GrpE, in the DNA replication of plasmids through activation of initiation proteins. The protein is Chaperone protein DnaJ of Escherichia fergusonii (strain ATCC 35469 / DSM 13698 / CCUG 18766 / IAM 14443 / JCM 21226 / LMG 7866 / NBRC 102419 / NCTC 12128 / CDC 0568-73).